A 90-amino-acid polypeptide reads, in one-letter code: MKILIFIIASFMLIGVECKEGYPMGSDGCKISCVVNNEYCKGQCSYISTQEDKKWKGSDGYCYFWGLACYCTGLPENAKVWDSKTNKCGG.

The signal sequence occupies residues 1–18 (MKILIFIIASFMLIGVEC). One can recognise an LCN-type CS-alpha/beta domain in the interval 19–89 (KEGYPMGSDG…VWDSKTNKCG (71 aa)). 4 disulfides stabilise this stretch: Cys29–Cys88, Cys33–Cys62, Cys40–Cys69, and Cys44–Cys71.

This sequence belongs to the long (4 C-C) scorpion toxin superfamily. Sodium channel inhibitor family. Beta subfamily. As to expression, expressed by the venom gland.

The protein localises to the secreted. Its function is as follows. Beta toxins bind voltage-independently at site-4 of sodium channels (Nav) and shift the voltage of activation toward more negative potentials thereby affecting sodium channel activation and promoting spontaneous and repetitive firing. The sequence is that of Putative beta-neurotoxin RjAa2f from Rhopalurus junceus (Caribbean blue scorpion).